The chain runs to 513 residues: Probable WRKY transcription factor 3 (513 aa).

Positions 1–11 (MAEKEEKEPSK) are enriched in basic and acidic residues. 3 disordered regions span residues 1 to 26 (MAEK…ISLP), 175 to 281 (NVHM…PACP), and 297 to 394 (IIYK…VASS). Residues 179 to 201 (QQSQQSEYPSSTQQQQQQQQQAS) show a composition bias toward low complexity. Positions 202-228 (LTEIPSFSSAPRSQIRASVQETSQGQR) are enriched in polar residues. A compositionally biased stretch (basic and acidic residues) spans 229 to 240 (ETSEISVFEHRS). A DNA-binding region (WRKY 1) is located at residues 244-308 (NADKPADDGY…YKGQHNHELP (65 aa)). 2 stretches are compositionally biased toward polar residues: residues 311–335 (RGNN…SSLN) and 343–355 (TSQV…MSEA). Positions 368 to 387 (VGERHEDEPDPKRRNTEVRV) are enriched in basic and acidic residues. The segment at residues 409-474 (SEVDLLDDGY…YEGKHNHDVP (66 aa)) is a DNA-binding region (WRKY 2).

In young, mature and senescent leaves.

The protein resides in the nucleus. In terms of biological role, transcription factor. Interacts specifically with the W box (5'-(T)TGAC[CT]-3'), a frequently occurring elicitor-responsive cis-acting element. The chain is Probable WRKY transcription factor 3 (WRKY3) from Arabidopsis thaliana (Mouse-ear cress).